A 100-amino-acid polypeptide reads, in one-letter code: Elastin (100 aa).

4-hydroxyproline occurs at positions 72 and 86. Residues C90 and C95 are joined by a disulfide bond.

This sequence belongs to the elastin family. As to quaternary structure, the polymeric elastin chains are cross-linked together into an extensible 3D network. Forms a ternary complex with BGN and MFAP2. Interacts with MFAP2 via divalent cations (calcium &gt; magnesium &gt; manganese) in a dose-dependent and saturating manner. Interacts with FBLN5 and FBN1. Forms a ternary complex with FBN1 and FBLN2 or FBLN5. Interacts with MFAP4 in a Ca (2+)-dependent manner; this interaction promotes ELN self-assembly. Interacts with EFEMP2 with moderate affinity. In terms of processing, elastin is formed through the cross-linking of its soluble precursor tropoelastin. Cross-linking is initiated through the action of lysyl oxidase on exposed lysines to form allysine. Subsequent spontaneous condensation reactions with other allysine or unmodified lysine residues result in various bi-, tri-, and tetrafunctional cross-links. The most abundant cross-links in mature elastin fibers are lysinonorleucine, allysine aldol, desmosine, and isodesmosine. Hydroxylation on proline residues within the sequence motif, GXPG, is most likely to be 4-hydroxy as this fits the requirement for 4-hydroxylation in vertebrates.

The protein localises to the secreted. The protein resides in the extracellular space. It localises to the extracellular matrix. Its function is as follows. Major structural protein of tissues such as aorta and nuchal ligament, which must expand rapidly and recover completely. Molecular determinant of the late arterial morphogenesis, stabilizing arterial structure by regulating proliferation and organization of vascular smooth muscle. This chain is Elastin (ELN), found in Ovis aries (Sheep).